The chain runs to 710 residues: MKQRQARLIGTPSQTRRQQELAEKLEKVKEVLEDEKKRQFNEPLFDLTKLRQALDKAIPQPEDVKGFFAQIIKSPSRYEIIFDEAMGVADIEEQEVIEKLRAKEEDEVYDFANNFVRQRRPLPQFFKTFFDKETEKDIFGDIDDISDDENSFTNQDGEAEDNEIITGIRQKDKPEETKEIKLIEQVNMNEGIGRGKILGNKPVFRSVQKSKPFIAEREELKAREGRKRRIQPIPFGIFKEEKLKTCLQFYKLFPWIKDQVLDVFVAPISSNFDDSFFIRSDFYEYISSPVGFAITDDEVEKFYRPKEKYYKLQCYGINKYYNENEPEIIHVNWNNQEYLFKIGILTENRGFLIQEADILLAEEDFIENWLGKSDKRREELLNSVNIPSDAKAVARNEILRSLLNVIPNADLLYTNRILTNIVEKIVDLSLNTSDFFLRVADLIVFINPNINFVSSVFPKRLAKMQYKPEILPLLTQREKLPEIFDDNRIPEATIEYVNRTIHFQIEKVYEDLVNYTVMYNVIPTRKATRPFQMGGKVKPTGRDDKIIIGLPEWKNACVNVNDVINIPDEDLIFYSDIEDQNSDVYCFPINELLDKFSREDIHNQYTGKDFSDTFVRRFLSVYSKPIQAERVVEVERVEEDNIPEGPLIKLIKAELLRLENNLIEPEYFQEEEIKCLECKKAVPAGEGMLSIFKGKKVAFCNMECFENKKW.

Residues 1–20 (MKQRQARLIGTPSQTRRQQE) form a disordered region. The stretch at 13 to 42 (SQTRRQQELAEKLEKVKEVLEDEKKRQFNE) forms a coiled coil.

The protein belongs to the IIV-6 268L family.

This is an uncharacterized protein from Invertebrate iridescent virus 6 (IIV-6).